The chain runs to 1676 residues: Protein TIC 214 (1676 aa).

Helical transmembrane passes span 23-43 (AGPL…PIAP), 71-91 (GILI…FLSI), 96-116 (LYMI…YMFF), 145-165 (AFLD…SPVM), 179-199 (VSLF…MFVL), and 226-246 (IFPP…PVSF).

This sequence belongs to the TIC214 family. In terms of assembly, part of the Tic complex.

It is found in the plastid. Its subcellular location is the chloroplast inner membrane. Functionally, involved in protein precursor import into chloroplasts. May be part of an intermediate translocation complex acting as a protein-conducting channel at the inner envelope. The polypeptide is Protein TIC 214 (Zygnema circumcarinatum (Green alga)).